The sequence spans 357 residues: DNA integrity scanning protein DisA (357 aa).

In terms of domain architecture, DAC spans 8–146 (VKSMINILQL…GNLRYTLKDI (139 aa)). Residues Gly75, Leu93, and 106–110 (MRHRT) each bind ATP.

The protein belongs to the DisA family. As to quaternary structure, homooctamer. The cofactor is Mg(2+).

It carries out the reaction 2 ATP = 3',3'-c-di-AMP + 2 diphosphate. Its function is as follows. Participates in a DNA-damage check-point that is active prior to asymmetric division when DNA is damaged. DisA forms globular foci that rapidly scan along the chromosomes during sporulation, searching for lesions. When a lesion is present, DisA pauses at the lesion site. This triggers a cellular response that culminates in a temporary block in sporulation initiation. Functionally, also has diadenylate cyclase activity, catalyzing the condensation of 2 ATP molecules into cyclic di-AMP (c-di-AMP). c-di-AMP acts as a signaling molecule that couples DNA integrity with progression of sporulation. The rise in c-di-AMP level generated by DisA while scanning the chromosome, operates as a positive signal that advances sporulation; upon encountering a lesion, the DisA focus arrests at the damaged site and halts c-di-AMP synthesis. This Bacillus cereus (strain ATCC 14579 / DSM 31 / CCUG 7414 / JCM 2152 / NBRC 15305 / NCIMB 9373 / NCTC 2599 / NRRL B-3711) protein is DNA integrity scanning protein DisA.